We begin with the raw amino-acid sequence, 283 residues long: MTFRQYIELLKPRIALMIALTAITGYGAVATKVDPVALLLLTLAMILGSAASAVFNHVWDRDIDRLMRRTSRRPMATGAGTPALGFALAVVLMVAGMALANAAFNWVVALHLFLGGFVYVAIYTVWLKRRHWTNIIIGGAAGSFAVLAGAAAVDQTQWLLPMVLALVLFLWTPSHFWSLAILLADDYRQAGVPMLPVVVGAKRTAWCILANTVILVGASLLPWGLGLLGNVYGFVAAVSGAVLLGFNVVLVRDTSRRWAGWNFAASMPYLLLLFIAVFADKHW.

9 helical membrane passes run Ile14–Asp34, Pro35–Phe55, Leu84–Phe104, Val107–Leu127, Thr133–Val153, Val163–Leu183, Ile208–Leu228, Val231–Val251, and Trp258–Phe278.

It belongs to the UbiA prenyltransferase family. Protoheme IX farnesyltransferase subfamily.

It is found in the cell inner membrane. It catalyses the reaction heme b + (2E,6E)-farnesyl diphosphate + H2O = Fe(II)-heme o + diphosphate. The protein operates within porphyrin-containing compound metabolism; heme O biosynthesis; heme O from protoheme: step 1/1. Its function is as follows. Converts heme B (protoheme IX) to heme O by substitution of the vinyl group on carbon 2 of heme B porphyrin ring with a hydroxyethyl farnesyl side group. This is Protoheme IX farnesyltransferase 1 from Paramagnetospirillum magneticum (strain ATCC 700264 / AMB-1) (Magnetospirillum magneticum).